A 170-amino-acid polypeptide reads, in one-letter code: Acireductone dioxygenase (170 aa).

Fe(2+)-binding residues include His99, His101, Glu105, and His144. Residues His99, His101, Glu105, and His144 each contribute to the Ni(2+) site.

This sequence belongs to the acireductone dioxygenase (ARD) family. Monomer. Fe(2+) serves as cofactor. The cofactor is Ni(2+).

It catalyses the reaction 1,2-dihydroxy-5-(methylsulfanyl)pent-1-en-3-one + O2 = 3-(methylsulfanyl)propanoate + CO + formate + 2 H(+). The catalysed reaction is 1,2-dihydroxy-5-(methylsulfanyl)pent-1-en-3-one + O2 = 4-methylsulfanyl-2-oxobutanoate + formate + 2 H(+). Its pathway is amino-acid biosynthesis; L-methionine biosynthesis via salvage pathway; L-methionine from S-methyl-5-thio-alpha-D-ribose 1-phosphate: step 5/6. Catalyzes 2 different reactions between oxygen and the acireductone 1,2-dihydroxy-3-keto-5-methylthiopentene (DHK-MTPene) depending upon the metal bound in the active site. Fe-containing acireductone dioxygenase (Fe-ARD) produces formate and 2-keto-4-methylthiobutyrate (KMTB), the alpha-ketoacid precursor of methionine in the methionine recycle pathway. Ni-containing acireductone dioxygenase (Ni-ARD) produces methylthiopropionate, carbon monoxide and formate, and does not lie on the methionine recycle pathway. The sequence is that of Acireductone dioxygenase from Bacillus cereus (strain ATCC 14579 / DSM 31 / CCUG 7414 / JCM 2152 / NBRC 15305 / NCIMB 9373 / NCTC 2599 / NRRL B-3711).